A 332-amino-acid chain; its full sequence is Fructose-1,6-bisphosphatase class 1 (332 aa).

Mg(2+) contacts are provided by glutamate 89, aspartate 110, leucine 112, and aspartate 113. Substrate contacts are provided by residues 113-116 (DGSS), asparagine 206, tyrosine 239, 257-259 (YLY), and lysine 269. Glutamate 275 contacts Mg(2+).

Belongs to the FBPase class 1 family. As to quaternary structure, homotetramer. Mg(2+) is required as a cofactor.

It localises to the cytoplasm. It carries out the reaction beta-D-fructose 1,6-bisphosphate + H2O = beta-D-fructose 6-phosphate + phosphate. It functions in the pathway carbohydrate biosynthesis; gluconeogenesis. This Salmonella typhimurium (strain LT2 / SGSC1412 / ATCC 700720) protein is Fructose-1,6-bisphosphatase class 1.